We begin with the raw amino-acid sequence, 254 residues long: Uridylate kinase (254 aa).

Residue 9 to 12 (KLSG) coordinates ATP. UMP is bound at residue Gly-51. Residues Gly-52 and Arg-56 each contribute to the ATP site. UMP-binding positions include Asp-72 and 133-140 (SGNPFFTT). Positions 160, 166, and 169 each coordinate ATP.

Belongs to the UMP kinase family. In terms of assembly, homohexamer.

The protein resides in the cytoplasm. It catalyses the reaction UMP + ATP = UDP + ADP. The protein operates within pyrimidine metabolism; CTP biosynthesis via de novo pathway; UDP from UMP (UMPK route): step 1/1. Inhibited by UTP. Functionally, catalyzes the reversible phosphorylation of UMP to UDP. The chain is Uridylate kinase from Synechococcus sp. (strain JA-3-3Ab) (Cyanobacteria bacterium Yellowstone A-Prime).